The chain runs to 595 residues: Inactive serine/threonine-protein kinase PLK5 (595 aa).

The Protein kinase domain maps to 27–279 (YRRGKLIGKG…LDHLLQDDFF (253 aa)). Residues 33-41 (IGKGAFSRC) and K56 each bind ATP. D150 (proton acceptor) is an active-site residue. Residues 326–350 (FTSKEASGPGEEGTEPDHMEAGNEE) are disordered. The span at 340-350 (EPDHMEAGNEE) shows a compositional bias: basic and acidic residues. POLO box domains follow at residues 413-491 (WAPK…YMQR) and 509-595 (DISL…LQSV).

The protein belongs to the protein kinase superfamily. Ser/Thr protein kinase family. CDC5/Polo subfamily. As to expression, expressed in the cerebellum, eye and brain cortex (at protein level). Expressed in highly differentiated tissues, such as brain, eyes and ovary. Not detectable in proliferating tissues, such as the colon, spleen and placenta.

The protein resides in the nucleus. Its subcellular location is the nucleolus. It is found in the cytoplasm. Functionally, inactive serine/threonine-protein kinase that plays a role in cell cycle progression and neuronal differentiation. The chain is Inactive serine/threonine-protein kinase PLK5 from Mus musculus (Mouse).